A 570-amino-acid chain; its full sequence is GTPase Obg (570 aa).

Residues 2 to 168 (SDFVDRVTVH…RDIILELKSI (167 aa)) enclose the Obg domain. Residues 15–43 (GDGGNGSAGIRREKYKPLAGPNGGNGGKG) form a disordered region. Residues 169 to 349 (ADVALVGFPS…LNFALAKLVK (181 aa)) enclose the OBG-type G domain. GTP is bound by residues 175–182 (GFPSAGKS), 200–204 (FTTLV), 221–224 (DVPG), 301–304 (NKID), and 330–332 (STA). The Mg(2+) site is built by Ser-182 and Thr-202. The OCT domain maps to 382 to 468 (GRNAQVREFE…ERAVAFDWDP (87 aa)). The segment at 521 to 570 (RAAMQAERAAGHWADPSIDDDRHDEQSLFGRGEVEEYEDEPGADGSRQLD) is disordered.

This sequence belongs to the TRAFAC class OBG-HflX-like GTPase superfamily. OBG GTPase family. Monomer. Mg(2+) is required as a cofactor.

The protein resides in the cytoplasm. In terms of biological role, an essential GTPase which binds GTP, GDP and possibly (p)ppGpp with moderate affinity, with high nucleotide exchange rates and a fairly low GTP hydrolysis rate. Plays a role in control of the cell cycle, stress response, ribosome biogenesis and in those bacteria that undergo differentiation, in morphogenesis control. The protein is GTPase Obg of Bifidobacterium animalis subsp. lactis (strain AD011).